Here is a 38-residue protein sequence, read N- to C-terminus: Phospholipase A2 2 (38 aa).

Ca(2+) contacts are provided by Tyr-28, Gly-30, and Gly-32.

Belongs to the phospholipase A2 family. Group I subfamily. Ca(2+) serves as cofactor. In terms of tissue distribution, expressed by the venom gland.

Its subcellular location is the secreted. The catalysed reaction is a 1,2-diacyl-sn-glycero-3-phosphocholine + H2O = a 1-acyl-sn-glycero-3-phosphocholine + a fatty acid + H(+). Snake venom phospholipase A2 (PLA2) that inhibits neuromuscular transmission by blocking acetylcholine release from the nerve termini. PLA2 catalyzes the calcium-dependent hydrolysis of the 2-acyl groups in 3-sn-phosphoglycerides. The polypeptide is Phospholipase A2 2 (Calliophis bivirgatus (Blue Malaysian coral snake)).